Reading from the N-terminus, the 349-residue chain is tRNA-specific 2-thiouridylase MnmA (349 aa).

Residues 6–13 (LLSGGVDS) and Met-32 contribute to the ATP site. The Nucleophile role is filled by Cys-103. Cysteines 103 and 195 form a disulfide. Gly-127 serves as a coordination point for ATP. The interval 145–147 (KDQ) is interaction with tRNA. The Cysteine persulfide intermediate role is filled by Cys-195.

Belongs to the MnmA/TRMU family.

Its subcellular location is the cytoplasm. The catalysed reaction is S-sulfanyl-L-cysteinyl-[protein] + uridine(34) in tRNA + AH2 + ATP = 2-thiouridine(34) in tRNA + L-cysteinyl-[protein] + A + AMP + diphosphate + H(+). Catalyzes the 2-thiolation of uridine at the wobble position (U34) of tRNA, leading to the formation of s(2)U34. In Pseudothermotoga lettingae (strain ATCC BAA-301 / DSM 14385 / NBRC 107922 / TMO) (Thermotoga lettingae), this protein is tRNA-specific 2-thiouridylase MnmA.